A 119-amino-acid chain; its full sequence is MRKRNISLKSKIEIQKIFKEGKLIRFSNLNLKMFYKSNHLVYSRILVTFSKGFRGSVKRNRIRRLFKEAFRKRLELLEGIALDIIFVVSYGKLTLTYFSIESLMKGLVLRCERGIGESK.

This sequence belongs to the RnpA family. Consists of a catalytic RNA component (M1 or rnpB) and a protein subunit.

The catalysed reaction is Endonucleolytic cleavage of RNA, removing 5'-extranucleotides from tRNA precursor.. In terms of biological role, RNaseP catalyzes the removal of the 5'-leader sequence from pre-tRNA to produce the mature 5'-terminus. It can also cleave other RNA substrates such as 4.5S RNA. The protein component plays an auxiliary but essential role in vivo by binding to the 5'-leader sequence and broadening the substrate specificity of the ribozyme. This Borreliella burgdorferi (strain ATCC 35210 / DSM 4680 / CIP 102532 / B31) (Borrelia burgdorferi) protein is Ribonuclease P protein component.